Here is a 101-residue protein sequence, read N- to C-terminus: Gamma-secretase subunit PEN-2 (101 aa).

Topologically, residues 1–17 are cytoplasmic; it reads MNLERVSNEEKLNLCRK. The segment at residues 18-36 is an intramembrane region (helical); it reads YYLGGFAFLPFLWLVNIFW. At 37-57 the chain is on the cytoplasmic side; sequence FFKEAFFAPAYTEQSQIKGYV. The helical transmembrane segment at 58–78 threads the bilayer; that stretch reads WRSAVGFLFWVIVLTTWITIF. The Lumenal portion of the chain corresponds to 79 to 101; the sequence is QIYRPRWGALGDYLSFTIPLGTP.

The protein belongs to the PEN-2 family. As to quaternary structure, the functional gamma-secretase complex is composed of at least four polypeptides: a presenilin homodimer (PSEN1 or PSEN2), nicastrin (NCSTN), APH1 (APH1A or APH1B) and PSENEN.

Its subcellular location is the endoplasmic reticulum membrane. It localises to the golgi apparatus. The protein resides in the golgi stack membrane. It is found in the cell membrane. The protein localises to the membrane. Functionally, essential subunit of the gamma-secretase complex, an endoprotease complex that catalyzes the intramembrane cleavage of integral membrane proteins such as Notch receptors and APP (amyloid-beta precursor protein). The gamma-secretase complex plays a role in Notch and Wnt signaling cascades and regulation of downstream processes via its role in processing key regulatory proteins, and by regulating cytosolic CTNNB1 levels. PSENEN modulates both endoproteolysis of presenilin and gamma-secretase activity. This chain is Gamma-secretase subunit PEN-2 (Psenen), found in Rattus norvegicus (Rat).